The following is a 576-amino-acid chain: Apolipoprotein N-acyltransferase 1 (576 aa).

7 consecutive transmembrane segments (helical) span residues 15 to 35, 38 to 58, 60 to 80, 92 to 112, 128 to 148, 168 to 188, and 204 to 224; these read LILC…FSFF, GVFA…TSIW, AFLW…YWIP, FVSI…FFLF, YILL…FQIF, ICGV…FLIL, and IASL…IGYI. Residues 236–538 enclose the CN hydrolase domain; the sequence is LSVLMIQPDT…TGTRAFSIRL (303 aa). The active-site Proton acceptor is the E285. K355 is a catalytic residue. The active-site Nucleophile is C446. The chain crosses the membrane as a helical span at residues 549 to 569; sequence FGNSFLWIFCILILISRLIFV.

This sequence belongs to the CN hydrolase family. Apolipoprotein N-acyltransferase subfamily.

Its subcellular location is the cell inner membrane. It catalyses the reaction N-terminal S-1,2-diacyl-sn-glyceryl-L-cysteinyl-[lipoprotein] + a glycerophospholipid = N-acyl-S-1,2-diacyl-sn-glyceryl-L-cysteinyl-[lipoprotein] + a 2-acyl-sn-glycero-3-phospholipid + H(+). Its pathway is protein modification; lipoprotein biosynthesis (N-acyl transfer). Functionally, catalyzes the phospholipid dependent N-acylation of the N-terminal cysteine of apolipoprotein, the last step in lipoprotein maturation. In Leptospira interrogans serogroup Icterohaemorrhagiae serovar copenhageni (strain Fiocruz L1-130), this protein is Apolipoprotein N-acyltransferase 1.